Consider the following 256-residue polypeptide: MNILITNDDGLTSNGIIAARNSVEDLGQTTLVAPLTQQSGVGHAITLMKPLRAIKTELSDKTYGYAVTGTPTDCVILAVKSIMDKKPDLIISGMNIGENLSRSITTSGTLGATFEAASFGIPAIAVSLQVNREDLKFRTGVNFIDYSHAESIVNKLAKKVIKHGMPEGVDILNLNIPANPDSDEIIQSNFADRMFSTDVEKRIDPYGHPYYWIVGDLIDDGIEGTDVHTLHILNQPAVTPISIDMDAQVNISKWLD.

Residues aspartate 8, aspartate 9, serine 39, and asparagine 95 each contribute to the a divalent metal cation site.

This sequence belongs to the SurE nucleotidase family. The cofactor is a divalent metal cation.

It is found in the cytoplasm. It carries out the reaction a ribonucleoside 5'-phosphate + H2O = a ribonucleoside + phosphate. In terms of biological role, nucleotidase that shows phosphatase activity on nucleoside 5'-monophosphates. The sequence is that of 5'-nucleotidase SurE from Methanosphaera stadtmanae (strain ATCC 43021 / DSM 3091 / JCM 11832 / MCB-3).